Consider the following 108-residue polypeptide: T cell receptor alpha variable 1-1 (108 aa).

Positions 1 to 18 are cleaved as a signal peptide; sequence MWGAFLLYVSMKMGGTAG. The Ig-like domain occupies 19-108; it reads QSLEQPSEVT…DSASYFCAVR (90 aa). N-linked (GlcNAc...) asparagine glycosylation is present at N38. Cysteines 39 and 105 form a disulfide.

In terms of assembly, alpha-beta TR is a heterodimer composed of an alpha and beta chain; disulfide-linked. The alpha-beta TR is associated with the transmembrane signaling CD3 coreceptor proteins to form the TR-CD3 (TcR or TCR). The assembly of alpha-beta TR heterodimers with CD3 occurs in the endoplasmic reticulum where a single alpha-beta TR heterodimer associates with one CD3D-CD3E heterodimer, one CD3G-CD3E heterodimer and one CD247 homodimer forming a stable octameric structure. CD3D-CD3E and CD3G-CD3E heterodimers preferentially associate with TR alpha and TR beta chains, respectively. The association of the CD247 homodimer is the last step of TcR assembly in the endoplasmic reticulum and is required for transport to the cell surface.

It localises to the cell membrane. Its function is as follows. V region of the variable domain of T cell receptor (TR) alpha chain that participates in the antigen recognition. Alpha-beta T cell receptors are antigen specific receptors which are essential to the immune response and are present on the cell surface of T lymphocytes. Recognize peptide-major histocompatibility (MH) (pMH) complexes that are displayed by antigen presenting cells (APC), a prerequisite for efficient T cell adaptive immunity against pathogens. Binding of alpha-beta TR to pMH complex initiates TR-CD3 clustering on the cell surface and intracellular activation of LCK that phosphorylates the ITAM motifs of CD3G, CD3D, CD3E and CD247 enabling the recruitment of ZAP70. In turn ZAP70 phosphorylates LAT, which recruits numerous signaling molecules to form the LAT signalosome. The LAT signalosome propagates signal branching to three major signaling pathways, the calcium, the mitogen-activated protein kinase (MAPK) kinase and the nuclear factor NF-kappa-B (NF-kB) pathways, leading to the mobilization of transcription factors that are critical for gene expression and essential for T cell growth and differentiation. The T cell repertoire is generated in the thymus, by V-(D)-J rearrangement. This repertoire is then shaped by intrathymic selection events to generate a peripheral T cell pool of self-MH restricted, non-autoaggressive T cells. Post-thymic interaction of alpha-beta TR with the pMH complexes shapes TR structural and functional avidity. The polypeptide is T cell receptor alpha variable 1-1 (Homo sapiens (Human)).